Consider the following 583-residue polypeptide: Secretogranin-2b (583 aa).

The signal sequence occupies residues 1–28 (MMLSLPKLSAGGVVVLLATLLHTLTVQG). Disordered stretches follow at residues 123–159 (AGES…AGFV) and 526–583 (VDNG…VAGM). Basic and acidic residues predominate over residues 534–546 (AKRDTQGKEEPEG).

It belongs to the chromogranin/secretogranin protein family.

The protein localises to the secreted. Functionally, neuroendocrine protein of the granin family that regulates the biogenesis of secretory granules. Required for neurovascular modeling of the hindbrain. Acts in a non-cell autonomous manner and is required for migration and proliferation of central artery endothelial cells. Required for normal courting behavior and spawning. In Danio rerio (Zebrafish), this protein is Secretogranin-2b.